Reading from the N-terminus, the 831-residue chain is V-type proton ATPase subunit a (831 aa).

Topologically, residues 1–418 are cytoplasmic; sequence MSPSLFRSEE…DSYGIATYRE (418 aa). A helical transmembrane segment spans residues 419-437; that stretch reads VNHGIVAIVTFPFLFAIMF. Topologically, residues 438–439 are vacuolar; that stretch reads GD. The helical transmembrane segment at 440-456 threads the bilayer; it reads LGHGAIMASVALMFVLY. Topologically, residues 457–471 are cytoplasmic; sequence EKTLGAKKDLDEIVG. A helical transmembrane segment spans residues 472-501; the sequence is MVFYGRYIVLLMGLFSMYVGFVYNDLFSKP. Residues 502 to 548 lie on the Vacuolar side of the membrane; that stretch reads MSIFSSRWVWPVKSEEAIARAVQVGTYPIGIDPTWHSADNNLLFMNS. Residues 549-568 traverse the membrane as a helical segment; the sequence is YKMKLSIILGVIHMTFCLFL. Residues 569-586 are Cytoplasmic-facing; that stretch reads SLSNYRFFKRKLDIYAVF. A helical membrane pass occupies residues 587–607; sequence VPSLIFLEAIFGYLVITIVYK. Residues 608-650 lie on the Vacuolar side of the membrane; the sequence is WCIDWKAKDLQPPSLLNMLILMFLSPGTLEDQLYPGQKYLQVG. Residues 651 to 670 traverse the membrane as a helical segment; that stretch reads LVIAALICVPWLLIVKPFVL. The Cytoplasmic segment spans residues 671-723; the sequence is WRRHSNEENKYQSLNSDLPNVDEADALMAVDSQEKQAEPFELGEVVIHQVIHT. A helical transmembrane segment spans residues 724-748; that stretch reads IEFCLGCVSHTASYLRLWALSLAHN. Topologically, residues 749–769 are vacuolar; the sequence is QLSSVLWNMTLANGFRMTGIV. A helical transmembrane segment spans residues 770–808; the sequence is GSIFVVILFGFWFIATCVVLVAMEGTSAMLHSLRLHWVE. Over 809 to 831 the chain is Cytoplasmic; it reads GMSKHFEGEGYAFTPFTFKVTAE.

Belongs to the V-ATPase 116 kDa subunit family. In terms of assembly, V-ATPase is a heteromultimeric enzyme composed of a peripheral catalytic V1 complex (components A to H) attached to an integral membrane V0 proton pore complex (components: a, c, c', c'', d, e, f and VOA1).

It is found in the vacuole membrane. Its function is as follows. Subunit of the V0 complex of vacuolar(H+)-ATPase (V-ATPase), a multisubunit enzyme composed of a peripheral complex (V1) that hydrolyzes ATP and a membrane integral complex (V0) that translocates protons. V-ATPase is responsible for acidifying and maintaining the pH of intracellular compartments. This Schizosaccharomyces pombe (strain 972 / ATCC 24843) (Fission yeast) protein is V-type proton ATPase subunit a (vph1).